Consider the following 251-residue polypeptide: uncharacterized protein (251 aa).

In terms of domain architecture, Response regulatory spans 3–118; it reads KVIICDDERI…QLEHILDILV (116 aa). A 4-aspartylphosphate modification is found at Asp55. The HTH araC/xylS-type domain maps to 152-249; that stretch reads NQILSQIKQH…HMSPSDYNKQ (98 aa). 2 DNA-binding regions (H-T-H motif) span residues 169–190 and 216–239; these read LDLI…KEHV and HYEI…KKYL.

Phosphorylated by SERP2405.

It localises to the cytoplasm. Functionally, probable member of the two-component regulatory system SERP2405/SERP2406. This is an uncharacterized protein from Staphylococcus epidermidis (strain ATCC 35984 / DSM 28319 / BCRC 17069 / CCUG 31568 / BM 3577 / RP62A).